A 33-amino-acid chain; its full sequence is Brevinin-2CDYb (33 aa).

An intrachain disulfide couples Cys27 to Cys33.

This sequence belongs to the frog skin active peptide (FSAP) family. Brevinin subfamily. As to expression, expressed by the skin glands.

Its subcellular location is the secreted. Its function is as follows. Antimicrobial peptide. This Rana dybowskii (Dybovsky's frog) protein is Brevinin-2CDYb.